Consider the following 235-residue polypeptide: Phosphoribosylaminoimidazole-succinocarboxamide synthase (235 aa).

The protein belongs to the SAICAR synthetase family.

It catalyses the reaction 5-amino-1-(5-phospho-D-ribosyl)imidazole-4-carboxylate + L-aspartate + ATP = (2S)-2-[5-amino-1-(5-phospho-beta-D-ribosyl)imidazole-4-carboxamido]succinate + ADP + phosphate + 2 H(+). It participates in purine metabolism; IMP biosynthesis via de novo pathway; 5-amino-1-(5-phospho-D-ribosyl)imidazole-4-carboxamide from 5-amino-1-(5-phospho-D-ribosyl)imidazole-4-carboxylate: step 1/2. The sequence is that of Phosphoribosylaminoimidazole-succinocarboxamide synthase from Clostridium botulinum (strain Eklund 17B / Type B).